Here is a 347-residue protein sequence, read N- to C-terminus: Protein RecA (347 aa).

Residue glycine 64–threonine 71 coordinates ATP.

This sequence belongs to the RecA family.

It is found in the cytoplasm. Functionally, can catalyze the hydrolysis of ATP in the presence of single-stranded DNA, the ATP-dependent uptake of single-stranded DNA by duplex DNA, and the ATP-dependent hybridization of homologous single-stranded DNAs. It interacts with LexA causing its activation and leading to its autocatalytic cleavage. This Bartonella tribocorum (strain CIP 105476 / IBS 506) protein is Protein RecA.